We begin with the raw amino-acid sequence, 713 residues long: Polyribonucleotide nucleotidyltransferase (713 aa).

Residues D498 and D504 each coordinate Mg(2+). The 67-residue stretch at 565–631 (PRILSLKVPV…RIEDLTREAK (67 aa)) folds into the KH domain. The 69-residue stretch at 633-701 (GEIYEGTVTR…ERGKIDLIRP (69 aa)) folds into the S1 motif domain.

Belongs to the polyribonucleotide nucleotidyltransferase family. The cofactor is Mg(2+).

It localises to the cytoplasm. The enzyme catalyses RNA(n+1) + phosphate = RNA(n) + a ribonucleoside 5'-diphosphate. Involved in mRNA degradation. Catalyzes the phosphorolysis of single-stranded polyribonucleotides processively in the 3'- to 5'-direction. The chain is Polyribonucleotide nucleotidyltransferase from Thermus thermophilus.